We begin with the raw amino-acid sequence, 292 residues long: Acetyl-coenzyme A carboxylase carboxyl transferase subunit beta (292 aa).

The region spanning 29–292 (LWSKCPECGQ…HGCLQGSAAV (264 aa)) is the CoA carboxyltransferase N-terminal domain. Zn(2+) contacts are provided by cysteine 33, cysteine 36, cysteine 52, and cysteine 55. The segment at 33 to 55 (CPECGQVVYRKDLLANASVCSNC) adopts a C4-type zinc-finger fold.

Belongs to the AccD/PCCB family. As to quaternary structure, acetyl-CoA carboxylase is a heterohexamer composed of biotin carboxyl carrier protein (AccB), biotin carboxylase (AccC) and two subunits each of ACCase subunit alpha (AccA) and ACCase subunit beta (AccD). Zn(2+) is required as a cofactor.

The protein resides in the cytoplasm. It carries out the reaction N(6)-carboxybiotinyl-L-lysyl-[protein] + acetyl-CoA = N(6)-biotinyl-L-lysyl-[protein] + malonyl-CoA. It functions in the pathway lipid metabolism; malonyl-CoA biosynthesis; malonyl-CoA from acetyl-CoA: step 1/1. Its function is as follows. Component of the acetyl coenzyme A carboxylase (ACC) complex. Biotin carboxylase (BC) catalyzes the carboxylation of biotin on its carrier protein (BCCP) and then the CO(2) group is transferred by the transcarboxylase to acetyl-CoA to form malonyl-CoA. In Synechococcus sp. (strain WH7803), this protein is Acetyl-coenzyme A carboxylase carboxyl transferase subunit beta.